Reading from the N-terminus, the 620-residue chain is 1-deoxy-D-xylulose-5-phosphate synthase (620 aa).

Thiamine diphosphate contacts are provided by residues histidine 80 and 121–123 (GHS). Aspartate 152 lines the Mg(2+) pocket. Thiamine diphosphate-binding positions include 153 to 154 (GA), asparagine 181, tyrosine 288, and glutamate 370. Asparagine 181 contacts Mg(2+).

The protein belongs to the transketolase family. DXPS subfamily. As to quaternary structure, homodimer. Requires Mg(2+) as cofactor. The cofactor is thiamine diphosphate.

It carries out the reaction D-glyceraldehyde 3-phosphate + pyruvate + H(+) = 1-deoxy-D-xylulose 5-phosphate + CO2. Its pathway is metabolic intermediate biosynthesis; 1-deoxy-D-xylulose 5-phosphate biosynthesis; 1-deoxy-D-xylulose 5-phosphate from D-glyceraldehyde 3-phosphate and pyruvate: step 1/1. Catalyzes the acyloin condensation reaction between C atoms 2 and 3 of pyruvate and glyceraldehyde 3-phosphate to yield 1-deoxy-D-xylulose-5-phosphate (DXP). This is 1-deoxy-D-xylulose-5-phosphate synthase from Escherichia coli (strain 55989 / EAEC).